Here is a 173-residue protein sequence, read N- to C-terminus: uncharacterized protein (173 aa).

The segment at 49–72 is disordered; sequence PTRSGRTSNSGNRGPVMTSTSSIN.

This is an uncharacterized protein from Human adenovirus B serotype 7 (HAdV-7).